Here is a 148-residue protein sequence, read N- to C-terminus: MPNIDNTPLPSSFDAHPEFFQETKWQKVTRRLKEEPLIPIGYAATSYALWRAYKSMKARDSVELNRMFRARIYGHAFTLFAIVAGGIYYGQERKQRKEFEKALQEKQDQEKRDAWLRELEVRDKEDKDWRQRHAAMEMAAKEAEKKMG.

The HIG1 domain occupies 9–100 (LPSSFDAHPE…QERKQRKEFE (92 aa)). 2 helical membrane-spanning segments follow: residues 36 to 53 (PLIP…WRAY) and 72 to 89 (IYGH…GIYY). Positions 89–148 (YGQERKQRKEFEKALQEKQDQEKRDAWLRELEVRDKEDKDWRQRHAAMEMAAKEAEKKMG) form a coiled coil.

This sequence belongs to the RCF1 family. Associates with the respiratory chain complex III/complex IV supercomplex.

The protein localises to the mitochondrion membrane. Its function is as follows. Cytochrome c oxidase subunit which plays a role in assembly of respiratory supercomplexes. This is Respiratory supercomplex factor 1, mitochondrial (RCF1) from Ajellomyces dermatitidis (strain ER-3 / ATCC MYA-2586) (Blastomyces dermatitidis).